A 171-amino-acid polypeptide reads, in one-letter code: uncharacterized protein (171 aa).

This is an uncharacterized protein from Aedes vexans (Inland floodwater mosquito).